The following is a 158-amino-acid chain: Transcription elongation factor GreA (158 aa).

A coiled-coil region spans residues 45–72 (AEYHAAREQQSFIEGRIKQLEGELSHAE).

Belongs to the GreA/GreB family.

Functionally, necessary for efficient RNA polymerase transcription elongation past template-encoded arresting sites. The arresting sites in DNA have the property of trapping a certain fraction of elongating RNA polymerases that pass through, resulting in locked ternary complexes. Cleavage of the nascent transcript by cleavage factors such as GreA or GreB allows the resumption of elongation from the new 3'terminus. GreA releases sequences of 2 to 3 nucleotides. The chain is Transcription elongation factor GreA from Xylella fastidiosa (strain 9a5c).